Reading from the N-terminus, the 435-residue chain is Histidinol dehydrogenase (435 aa).

The NAD(+) site is built by Y131, Q189, and N212. Residues S238, Q260, and H263 each coordinate substrate. Zn(2+)-binding residues include Q260 and H263. Residues E327 and H328 each act as proton acceptor in the active site. Substrate-binding residues include H328, D361, E415, and H420. Zn(2+) is bound at residue D361. H420 serves as a coordination point for Zn(2+).

Belongs to the histidinol dehydrogenase family. Homodimer. Requires Zn(2+) as cofactor.

The catalysed reaction is L-histidinol + 2 NAD(+) + H2O = L-histidine + 2 NADH + 3 H(+). The protein operates within amino-acid biosynthesis; L-histidine biosynthesis; L-histidine from 5-phospho-alpha-D-ribose 1-diphosphate: step 9/9. Its function is as follows. Catalyzes the sequential NAD-dependent oxidations of L-histidinol to L-histidinaldehyde and then to L-histidine. The protein is Histidinol dehydrogenase (hisD) of Buchnera aphidicola subsp. Acyrthosiphon pisum (strain APS) (Acyrthosiphon pisum symbiotic bacterium).